Consider the following 239-residue polypeptide: ATP-dependent dethiobiotin synthetase BioD (239 aa).

15 to 20 is a binding site for ATP; it reads EIGKTF. Residue threonine 19 participates in Mg(2+) binding. The active site involves lysine 40. ATP is bound by residues aspartate 57, 118-121, and 178-179; these read EGVG and NH. Mg(2+) contacts are provided by aspartate 57 and glutamate 118.

This sequence belongs to the dethiobiotin synthetase family. As to quaternary structure, homodimer. Requires Mg(2+) as cofactor.

It localises to the cytoplasm. It catalyses the reaction (7R,8S)-7,8-diammoniononanoate + CO2 + ATP = (4R,5S)-dethiobiotin + ADP + phosphate + 3 H(+). The protein operates within cofactor biosynthesis; biotin biosynthesis; biotin from 7,8-diaminononanoate: step 1/2. In terms of biological role, catalyzes a mechanistically unusual reaction, the ATP-dependent insertion of CO2 between the N7 and N8 nitrogen atoms of 7,8-diaminopelargonic acid (DAPA, also called 7,8-diammoniononanoate) to form a ureido ring. The sequence is that of ATP-dependent dethiobiotin synthetase BioD from Burkholderia ambifaria (strain ATCC BAA-244 / DSM 16087 / CCUG 44356 / LMG 19182 / AMMD) (Burkholderia cepacia (strain AMMD)).